A 156-amino-acid polypeptide reads, in one-letter code: Bursicon (156 aa).

Residues 1–26 (MYALDFLFIAFVYFAACHIQEKPVRA) form the signal peptide. 5 cysteine pairs are disulfide-bonded: C37-C86, C51-C100, C61-C121, C65-C123, and C83-C126. The CTCK domain occupies 37–127 (CQMTPVIHIL…PLECMCRPCG (91 aa)).

As to quaternary structure, heterodimer of burs and pburs.

It localises to the secreted. Its function is as follows. Final heterodimeric neurohormone released at the end of the molting cycle, involved in the sclerotization (tanning) of the insect cuticle, melanization and wing spreading. This Manduca sexta (Tobacco hawkmoth) protein is Bursicon.